A 45-amino-acid chain; its full sequence is Osteocalcin (45 aa).

The Gla domain occupies Ala-1 to Gly-44. Positions 14, 18, 21, and 27 each coordinate Ca(2+). 4-carboxyglutamate is present on residues Glu-14, Glu-18, and Glu-21. Cysteines 20 and 26 form a disulfide.

This sequence belongs to the osteocalcin/matrix Gla protein family. Post-translationally, gamma-carboxyglutamate residues are formed by vitamin K dependent carboxylation by GGCX. These residues are essential for the binding of calcium.

The protein resides in the secreted. The carboxylated form is one of the main organic components of the bone matrix, which constitutes 1-2% of the total bone protein. The carboxylated form binds strongly to apatite and calcium. The polypeptide is Osteocalcin (bglap) (Danio rerio (Zebrafish)).